The sequence spans 144 residues: Small ribosomal subunit protein uS12 (144 aa).

A disordered region spans residues Met1–Pro55. The segment covering Gly27–Gln42 has biased composition (polar residues). Asp102 bears the 3-methylthioaspartic acid mark. Positions Gly119–Lys144 are disordered. Positions Lys124 to Lys144 are enriched in basic residues.

The protein belongs to the universal ribosomal protein uS12 family. Part of the 30S ribosomal subunit. Contacts proteins S8 and S17. May interact with IF1 in the 30S initiation complex.

In terms of biological role, with S4 and S5 plays an important role in translational accuracy. Functionally, interacts with and stabilizes bases of the 16S rRNA that are involved in tRNA selection in the A site and with the mRNA backbone. Located at the interface of the 30S and 50S subunits, it traverses the body of the 30S subunit contacting proteins on the other side and probably holding the rRNA structure together. The combined cluster of proteins S8, S12 and S17 appears to hold together the shoulder and platform of the 30S subunit. This chain is Small ribosomal subunit protein uS12, found in Brevibacillus brevis (strain 47 / JCM 6285 / NBRC 100599).